The sequence spans 411 residues: Tyrosine--tRNA ligase (411 aa).

Tyrosine 33 contacts L-tyrosine. A 'HIGH' region motif is present at residues 38–47; the sequence is PTADSLHLGN. 2 residues coordinate L-tyrosine: tyrosine 160 and glutamine 164. Positions 222–226 match the 'KMSKS' region motif; sequence KFGKS. Lysine 225 contributes to the ATP binding site. The 65-residue stretch at 346 to 410 folds into the S4 RNA-binding domain; the sequence is VNLVNFLVEN…GKKKILICKV (65 aa).

It belongs to the class-I aminoacyl-tRNA synthetase family. TyrS type 1 subfamily. In terms of assembly, homodimer.

It is found in the cytoplasm. It carries out the reaction tRNA(Tyr) + L-tyrosine + ATP = L-tyrosyl-tRNA(Tyr) + AMP + diphosphate + H(+). Catalyzes the attachment of tyrosine to tRNA(Tyr) in a two-step reaction: tyrosine is first activated by ATP to form Tyr-AMP and then transferred to the acceptor end of tRNA(Tyr). The protein is Tyrosine--tRNA ligase of Mycoplasmopsis synoviae (strain 53) (Mycoplasma synoviae).